The primary structure comprises 354 residues: UDP-N-acetylglucosamine--N-acetylmuramyl-(pentapeptide) pyrophosphoryl-undecaprenol N-acetylglucosamine transferase (354 aa).

UDP-N-acetyl-alpha-D-glucosamine is bound by residues 15–17 (TGG), Asn-127, Arg-163, Ser-191, Ile-244, 263–268 (ALTVSE), and Gln-288.

This sequence belongs to the glycosyltransferase 28 family. MurG subfamily.

The protein localises to the cell inner membrane. The enzyme catalyses di-trans,octa-cis-undecaprenyl diphospho-N-acetyl-alpha-D-muramoyl-L-alanyl-D-glutamyl-meso-2,6-diaminopimeloyl-D-alanyl-D-alanine + UDP-N-acetyl-alpha-D-glucosamine = di-trans,octa-cis-undecaprenyl diphospho-[N-acetyl-alpha-D-glucosaminyl-(1-&gt;4)]-N-acetyl-alpha-D-muramoyl-L-alanyl-D-glutamyl-meso-2,6-diaminopimeloyl-D-alanyl-D-alanine + UDP + H(+). The protein operates within cell wall biogenesis; peptidoglycan biosynthesis. In terms of biological role, cell wall formation. Catalyzes the transfer of a GlcNAc subunit on undecaprenyl-pyrophosphoryl-MurNAc-pentapeptide (lipid intermediate I) to form undecaprenyl-pyrophosphoryl-MurNAc-(pentapeptide)GlcNAc (lipid intermediate II). In Aliivibrio fischeri (strain ATCC 700601 / ES114) (Vibrio fischeri), this protein is UDP-N-acetylglucosamine--N-acetylmuramyl-(pentapeptide) pyrophosphoryl-undecaprenol N-acetylglucosamine transferase.